Here is a 467-residue protein sequence, read N- to C-terminus: Coiled-coil domain-containing protein 71 (467 aa).

Residues 81 to 105 form a disordered region; sequence PSQTKLQARAPNPTATSPPASAPRT. Low complexity predominate over residues 88 to 105; the sequence is ARAPNPTATSPPASAPRT. Position 129 is a phosphoserine (serine 129). Disordered regions lie at residues 211–280 and 349–416; these read KLRK…GTKT and VRAK…KAWL. The segment covering 253–265 has biased composition (polar residues); sequence GHQSKTNRATGSP. The stretch at 279–359 forms a coiled coil; it reads KTAQAKVART…RAKAKVARTQ (81 aa). Over residues 349-380 the composition is skewed to basic residues; it reads VRAKAKVARTQPRGRGRPKGSAKARTTRKGQK. A compositionally biased stretch (basic and acidic residues) spans 392–401; sequence RAEEAKDLPP.

This chain is Coiled-coil domain-containing protein 71 (CCDC71), found in Homo sapiens (Human).